A 463-amino-acid chain; its full sequence is Quinolone resistance protein NorB (463 aa).

14 helical membrane passes run 17–37, 53–73, 86–106, 107–127, 142–162, 165–185, 201–221, 230–250, 273–293, 299–319, 334–354, 357–377, 403–423, and 435–455; these read IGIVLSVITFWLFAQSLVNVV, IAVSITALFSGMFVVGAGGLA, IILNILGSLLIIISNIPLLLI, IGRLIQGLSAACIMPATLSII, YWSIGSWGGSGVCSFFGGAVA, LGWRWIFILSIIISLIALFLI, FDIKGLVLLVIMLLTLNILIT, SLLFITLLAIAIGSFSLFIVL, TASNFLLNGVAGTLIVANTFV, YSSLQAGSLSITYLVMVLIMI, PMLIGTGVLIVGECLISLTFL, ILYVICCIIGYLFFGLGLGIY, MASALGGAFGVALSGAVYAIV, and IALWLNAGMGILSFVIILLLV.

Belongs to the major facilitator superfamily. TCR/Tet family.

Its subcellular location is the cell membrane. In terms of biological role, multidrug efflux pump that acts independently of NorA and is one of the factors that confers resistance against diverse quinolones and chemical compounds. The sequence is that of Quinolone resistance protein NorB (norB) from Staphylococcus aureus (strain Mu3 / ATCC 700698).